The chain runs to 227 residues: UPF0173 metal-dependent hydrolase STK_14180 (227 aa).

It belongs to the UPF0173 family.

The polypeptide is UPF0173 metal-dependent hydrolase STK_14180 (Sulfurisphaera tokodaii (strain DSM 16993 / JCM 10545 / NBRC 100140 / 7) (Sulfolobus tokodaii)).